The chain runs to 561 residues: Arginine--tRNA ligase (561 aa).

Positions 129-139 (ANPTGPLHIGH) match the 'HIGH' region motif.

Belongs to the class-I aminoacyl-tRNA synthetase family. In terms of assembly, monomer.

Its subcellular location is the cytoplasm. It catalyses the reaction tRNA(Arg) + L-arginine + ATP = L-arginyl-tRNA(Arg) + AMP + diphosphate. This chain is Arginine--tRNA ligase, found in Geotalea daltonii (strain DSM 22248 / JCM 15807 / FRC-32) (Geobacter daltonii).